Here is a 504-residue protein sequence, read N- to C-terminus: 2,3-bisphosphoglycerate-independent phosphoglycerate mutase (504 aa).

Positions 11 and 61 each coordinate Mn(2+). The Phosphoserine intermediate role is filled by serine 61. Substrate-binding positions include histidine 122, 152-153, arginine 183, arginine 189, 255-258, and lysine 329; these read RD and RNDR. Residues aspartate 396, histidine 400, aspartate 437, histidine 438, and histidine 455 each coordinate Mn(2+).

Belongs to the BPG-independent phosphoglycerate mutase family. Monomer. Mn(2+) is required as a cofactor.

The enzyme catalyses (2R)-2-phosphoglycerate = (2R)-3-phosphoglycerate. It functions in the pathway carbohydrate degradation; glycolysis; pyruvate from D-glyceraldehyde 3-phosphate: step 3/5. Catalyzes the interconversion of 2-phosphoglycerate and 3-phosphoglycerate. The sequence is that of 2,3-bisphosphoglycerate-independent phosphoglycerate mutase from Bacteroides fragilis (strain ATCC 25285 / DSM 2151 / CCUG 4856 / JCM 11019 / LMG 10263 / NCTC 9343 / Onslow / VPI 2553 / EN-2).